A 398-amino-acid chain; its full sequence is Succinate--CoA ligase [ADP-forming] subunit beta (398 aa).

The ATP-grasp domain occupies 9 to 250 (KQLFARYGVP…VDEEDPVELQ (242 aa)). ATP contacts are provided by residues lysine 50, 57 to 59 (GRG), glutamate 104, leucine 107, and glutamate 112. 2 residues coordinate Mg(2+): asparagine 205 and aspartate 219. Substrate is bound by residues asparagine 270 and 327-329 (GIM).

Belongs to the succinate/malate CoA ligase beta subunit family. Heterotetramer of two alpha and two beta subunits. Mg(2+) is required as a cofactor.

The catalysed reaction is succinate + ATP + CoA = succinyl-CoA + ADP + phosphate. The enzyme catalyses GTP + succinate + CoA = succinyl-CoA + GDP + phosphate. It functions in the pathway carbohydrate metabolism; tricarboxylic acid cycle; succinate from succinyl-CoA (ligase route): step 1/1. Its function is as follows. Succinyl-CoA synthetase functions in the citric acid cycle (TCA), coupling the hydrolysis of succinyl-CoA to the synthesis of either ATP or GTP and thus represents the only step of substrate-level phosphorylation in the TCA. The beta subunit provides nucleotide specificity of the enzyme and binds the substrate succinate, while the binding sites for coenzyme A and phosphate are found in the alpha subunit. The chain is Succinate--CoA ligase [ADP-forming] subunit beta from Sorangium cellulosum (strain So ce56) (Polyangium cellulosum (strain So ce56)).